The chain runs to 308 residues: N-acetyl-gamma-glutamyl-phosphate reductase (308 aa).

Cys116 is an active-site residue.

This sequence belongs to the NAGSA dehydrogenase family. Type 2 subfamily.

Its subcellular location is the cytoplasm. The catalysed reaction is N-acetyl-L-glutamate 5-semialdehyde + phosphate + NADP(+) = N-acetyl-L-glutamyl 5-phosphate + NADPH + H(+). It participates in amino-acid biosynthesis; L-arginine biosynthesis; N(2)-acetyl-L-ornithine from L-glutamate: step 3/4. Functionally, catalyzes the NADPH-dependent reduction of N-acetyl-5-glutamyl phosphate to yield N-acetyl-L-glutamate 5-semialdehyde. The sequence is that of N-acetyl-gamma-glutamyl-phosphate reductase from Mesorhizobium japonicum (strain LMG 29417 / CECT 9101 / MAFF 303099) (Mesorhizobium loti (strain MAFF 303099)).